The primary structure comprises 258 residues: uncharacterized protein (258 aa).

A helical transmembrane segment spans residues 163–187; that stretch reads GIVGAAGLMLMFADLNGIPGICLMG.

It localises to the membrane. This is an uncharacterized protein from Methanocaldococcus jannaschii (strain ATCC 43067 / DSM 2661 / JAL-1 / JCM 10045 / NBRC 100440) (Methanococcus jannaschii).